The chain runs to 336 residues: UbiA prenyltransferase domain-containing protein 1 (336 aa).

The segment at 1 to 22 (MQEMKPAALSGSNGLNGASGSS) is disordered. The span at 7–22 (AALSGSNGLNGASGSS) shows a compositional bias: low complexity. The next 7 membrane-spanning stretches (helical) occupy residues 79 to 99 (LLLL…GNLV), 129 to 149 (VVMF…LLYF), 158 to 178 (LALI…GIGL), 180 to 200 (YVAL…VMFA), 201 to 221 (HAVQ…PLAL), 254 to 274 (LSYV…CILA), and 315 to 335 (LLMG…SLPL).

It belongs to the UbiA prenyltransferase family.

It localises to the endoplasmic reticulum membrane. The protein resides in the golgi apparatus membrane. Its subcellular location is the mitochondrion membrane. The enzyme catalyses menadiol + (2E,6E,10E)-geranylgeranyl diphosphate = menaquinol-4 + diphosphate. The catalysed reaction is all-trans-decaprenyl diphosphate + 4-hydroxybenzoate = 4-hydroxy-3-(all-trans-decaprenyl)benzoate + diphosphate. The protein operates within quinol/quinone metabolism; menaquinone biosynthesis. Its pathway is cofactor biosynthesis; ubiquinone biosynthesis. Its function is as follows. Prenyltransferase that mediates the formation of menaquinone-4 (MK-4) and coenzyme Q10. MK-4 is a vitamin K2 isoform required for endothelial cell development. Mediates the conversion of phylloquinone (PK) into MK-4, probably by cleaving the side chain of phylloquinone (PK) to release 2-methyl-1,4-naphthoquinone (menadione; K3) and then prenylating it with geranylgeranyl pyrophosphate (GGPP) to form MK-4. Also plays a role in cardiovascular development independently of MK-4 biosynthesis, by acting as a coenzyme Q10 biosynthetic enzyme: coenzyme Q10, also named ubiquinone, plays an important antioxidant role in the cardiovascular system. Mediates biosynthesis of coenzyme Q10 in the Golgi membrane, leading to protect cardiovascular tissues from nos3/eNOS-dependent oxidative stress. This is UbiA prenyltransferase domain-containing protein 1 (ubiad1) from Danio rerio (Zebrafish).